Reading from the N-terminus, the 371-residue chain is uncharacterized protein (371 aa).

The disordered stretch occupies residues 339 to 371 (KVTHEDLVKNRPRSPVRPPIPATAKTPDLPERH).

This is an uncharacterized protein from Escherichia coli (strain K12).